Consider the following 865-residue polypeptide: Xylosyltransferase 2 (865 aa).

The Cytoplasmic segment spans residues 1–15; that stretch reads MVASARVQKLVRRYK. Residues 16-36 form a helical; Signal-anchor for type II membrane protein membrane-spanning segment; the sequence is LAIATALAILLLQGLVVWSFS. Residues 37 to 865 are Lumenal-facing; it reads GLEEDEPGEK…GPVKADGRLR (829 aa). Residues 39-157 form a disordered region; sequence EEDEPGEKGR…EGAPQPTDNG (119 aa). A compositionally biased stretch (basic and acidic residues) spans 53-65; that stretch reads RPLDPGEGSKDTD. The span at 73–82 shows a compositional bias: basic residues; sequence SAGRRHGRWR. N-linked (GlcNAc...) asparagine glycosylation is present at asparagine 122. Low complexity predominate over residues 125 to 137; that stretch reads GAAAGEALVGAAG. Disulfide bonds link cysteine 162-cysteine 190, cysteine 206-cysteine 448, cysteine 467-cysteine 480, and cysteine 469-cysteine 478. UDP-alpha-D-xylose contacts are provided by residues valine 239, aspartate 267, and 296–298; that span reads TIW. A glycan (N-linked (GlcNAc...) asparagine) is linked at asparagine 327. Residue 400-401 participates in UDP-alpha-D-xylose binding; it reads DW. Residues serine 481 and 504-505 contribute to the UDP-alpha-D-xylose site; that span reads RK. Intrachain disulfides connect cysteine 581–cysteine 833 and cysteine 826–cysteine 839. An N-linked (GlcNAc...) asparagine glycan is attached at asparagine 683.

This sequence belongs to the glycosyltransferase 14 family. XylT subfamily. In terms of assembly, monomer. Requires Mg(2+) as cofactor. Mn(2+) serves as cofactor. In terms of processing, contains disulfide bonds.

It is found in the golgi apparatus membrane. Its subcellular location is the secreted. It carries out the reaction UDP-alpha-D-xylose + L-seryl-[protein] = 3-O-(beta-D-xylosyl)-L-seryl-[protein] + UDP + H(+). It participates in glycan metabolism; chondroitin sulfate biosynthesis. Its pathway is glycan metabolism; heparan sulfate biosynthesis. Functionally, catalyzes the first step in the biosynthesis of chondroitin sulfate, heparan sulfate and dermatan sulfate proteoglycans, such as DCN. Transfers D-xylose from UDP-D-xylose to specific serine residues of the core protein. The chain is Xylosyltransferase 2 (XYLT2) from Canis lupus familiaris (Dog).